A 517-amino-acid polypeptide reads, in one-letter code: Superoxide-generating NADPH oxidase heavy chain subunit A (517 aa).

Topologically, residues 1–19 (MRLPTKEEIQRYWVNEGNK) are cytoplasmic. The helical transmembrane segment at 20-40 (LILVILYTLGNIAAFVYTFVH) threads the bilayer. The Extracellular portion of the chain corresponds to 41 to 62 (YYNSPAFEVVGYGVCFARGCAQ). Positions 58 to 201 (RGCAQLLKLN…LFVVFFGLLV (144 aa)) constitute a Ferric oxidoreductase domain. The helical transmembrane segment at 63 to 83 (LLKLNCALILVPVLRNLLSFL) threads the bilayer. Residues 84-97 (RGTFLNNYVPFDKN) are Cytoplasmic-facing. The helical transmembrane segment at 98–118 (IVFHKLIAWVICFATFGHVMA) threads the bilayer. The heme site is built by histidine 101 and histidine 115. Residues 119 to 149 (HFNNFRLYQDITPQEYKRILGIDYPNLTPIK) lie on the Extracellular side of the membrane. A helical transmembrane segment spans residues 150–170 (YAFATLAGWTGHVVCIVMVLM). Residues 171 to 184 (YTSAVESIRRPMFE) lie on the Cytoplasmic side of the membrane. The chain crosses the membrane as a helical span at residues 185 to 205 (GFWYTHHLFVVFFGLLVVHGL). Positions 190 and 203 each coordinate heme. Position 206 (histidine 206) is a topological domain, extracellular. A helical transmembrane segment spans residues 207–227 (SILEPTSFWKWVIGPCALYIV). Topologically, residues 228–517 (ERLIRLLRSK…CRFHYNKENF (290 aa)) are cytoplasmic. An FAD-binding FR-type domain is found at 229-349 (RLIRLLRSKK…DGPFGAASEE (121 aa)). 283–289 (HPFTITS) provides a ligand contact to FAD.

As to quaternary structure, composed of a heavy chain and a light chain. Requires FAD as cofactor.

The protein localises to the membrane. Critical component of the membrane-bound oxidase that generates superoxide. It is the terminal component of a respiratory chain that transfers single electrons from cytoplasmic NADPH across the plasma membrane to molecular oxygen on the exterior. The protein is Superoxide-generating NADPH oxidase heavy chain subunit A (noxA) of Dictyostelium discoideum (Social amoeba).